A 366-amino-acid chain; its full sequence is Phenylalanine--tRNA ligase alpha subunit (366 aa).

E264 contacts Mg(2+).

The protein belongs to the class-II aminoacyl-tRNA synthetase family. Phe-tRNA synthetase alpha subunit type 1 subfamily. As to quaternary structure, tetramer of two alpha and two beta subunits. Mg(2+) serves as cofactor.

The protein resides in the cytoplasm. The enzyme catalyses tRNA(Phe) + L-phenylalanine + ATP = L-phenylalanyl-tRNA(Phe) + AMP + diphosphate + H(+). In Zymomonas mobilis subsp. mobilis (strain ATCC 31821 / ZM4 / CP4), this protein is Phenylalanine--tRNA ligase alpha subunit.